Consider the following 479-residue polypeptide: Ribosomal RNA small subunit methyltransferase F (479 aa).

S-adenosyl-L-methionine is bound by residues 125–131, E149, G177, and D194; that span reads AAAPGSK. C247 serves as the catalytic Nucleophile.

It belongs to the class I-like SAM-binding methyltransferase superfamily. RsmB/NOP family.

The protein resides in the cytoplasm. The enzyme catalyses cytidine(1407) in 16S rRNA + S-adenosyl-L-methionine = 5-methylcytidine(1407) in 16S rRNA + S-adenosyl-L-homocysteine + H(+). Specifically methylates the cytosine at position 1407 (m5C1407) of 16S rRNA. This chain is Ribosomal RNA small subunit methyltransferase F, found in Shigella flexneri serotype 5b (strain 8401).